The sequence spans 43 residues: Large ribosomal subunit protein uL11 (43 aa).

This sequence belongs to the universal ribosomal protein uL11 family. As to quaternary structure, part of the ribosomal stalk of the 50S ribosomal subunit. Interacts with L10 and the large rRNA to form the base of the stalk. L10 forms an elongated spine to which L12 dimers bind in a sequential fashion forming a multimeric L10(L12)X complex. Post-translationally, one or more lysine residues are methylated.

In terms of biological role, forms part of the ribosomal stalk which helps the ribosome interact with GTP-bound translation factors. The sequence is that of Large ribosomal subunit protein uL11 (rplK) from Streptomyces galbus.